Consider the following 102-residue polypeptide: Iron-sulfur cluster assembly protein CyaY (102 aa).

The protein belongs to the frataxin family.

In terms of biological role, involved in iron-sulfur (Fe-S) cluster assembly. May act as a regulator of Fe-S biogenesis. The polypeptide is Iron-sulfur cluster assembly protein CyaY (Histophilus somni (strain 2336) (Haemophilus somnus)).